Consider the following 240-residue polypeptide: UDP-2,3-diacylglucosamine hydrolase (240 aa).

Residues Asp-8, His-10, Asp-41, Asn-79, and His-114 each contribute to the Mn(2+) site. 79–80 (NR) provides a ligand contact to substrate. Residues Asp-122, Ser-160, Asn-164, Lys-167, and His-195 each contribute to the substrate site. Positions 195 and 197 each coordinate Mn(2+).

This sequence belongs to the LpxH family. The cofactor is Mn(2+).

It localises to the cell inner membrane. The catalysed reaction is UDP-2-N,3-O-bis[(3R)-3-hydroxytetradecanoyl]-alpha-D-glucosamine + H2O = 2-N,3-O-bis[(3R)-3-hydroxytetradecanoyl]-alpha-D-glucosaminyl 1-phosphate + UMP + 2 H(+). It participates in glycolipid biosynthesis; lipid IV(A) biosynthesis; lipid IV(A) from (3R)-3-hydroxytetradecanoyl-[acyl-carrier-protein] and UDP-N-acetyl-alpha-D-glucosamine: step 4/6. Hydrolyzes the pyrophosphate bond of UDP-2,3-diacylglucosamine to yield 2,3-diacylglucosamine 1-phosphate (lipid X) and UMP by catalyzing the attack of water at the alpha-P atom. Involved in the biosynthesis of lipid A, a phosphorylated glycolipid that anchors the lipopolysaccharide to the outer membrane of the cell. This Salmonella typhi protein is UDP-2,3-diacylglucosamine hydrolase.